Consider the following 952-residue polypeptide: Meiosis-specific coiled-coil domain-containing protein MEIOC (952 aa).

3 disordered regions span residues 1 to 23, 609 to 629, and 933 to 952; these read MEVR…EGLE, QAKP…LDGL, and VHES…TNKH. Residues 617-627 show a composition bias toward basic and acidic residues; it reads YDPEEGPKHLD. Over residues 936–952 the composition is skewed to polar residues; it reads SINSSNPMNQRGETNKH.

Interacts with YTHDC2; binds transcript that regulate the mitotic cell cycle inhibiting progression into metaphase, thereby allowing meiotic prophase to proceed normally. Interacts with RBM46. In terms of tissue distribution, expressed in fetal ovaries. Expressed in testis.

Its subcellular location is the cytoplasm. The protein localises to the nucleus. Is required for meiosis completion in both male and female germ cells. Confers stability to numerous meiotic mRNAs in gonads allowing proper initiation and progression into meiosis prophase I. The function may involve YTHDC2 and is independent of induction by retinoic acid (RA). Maintains an extended meiotic prophase I by properly promoting the transition from a mitotic to a meiotic cell cycle program by binding transcripts through its interaction with YTHDC2 that regulate the mitotic cell cycle. The polypeptide is Meiosis-specific coiled-coil domain-containing protein MEIOC (Homo sapiens (Human)).